Consider the following 121-residue polypeptide: NADPH-dependent 7-cyano-7-deazaguanine reductase (121 aa).

Cys36 functions as the Thioimide intermediate in the catalytic mechanism. Catalysis depends on Asp43, which acts as the Proton donor. Residues 58–60 (VEL) and 77–78 (YE) each bind substrate.

This sequence belongs to the GTP cyclohydrolase I family. QueF type 1 subfamily.

The protein localises to the cytoplasm. It carries out the reaction 7-aminomethyl-7-carbaguanine + 2 NADP(+) = 7-cyano-7-deazaguanine + 2 NADPH + 3 H(+). Its pathway is tRNA modification; tRNA-queuosine biosynthesis. In terms of biological role, catalyzes the NADPH-dependent reduction of 7-cyano-7-deazaguanine (preQ0) to 7-aminomethyl-7-deazaguanine (preQ1). The sequence is that of NADPH-dependent 7-cyano-7-deazaguanine reductase from Rhodopirellula baltica (strain DSM 10527 / NCIMB 13988 / SH1).